Consider the following 223-residue polypeptide: Cytolethal distending toxin subunit A (223 aa).

The signal sequence occupies residues 1 to 15; that stretch reads MKKFLPSLLLMGSVA. The N-palmitoyl cysteine moiety is linked to residue Cys16. Cys16 carries the S-diacylglycerol cysteine lipid modification. Residues 20 to 48 form a disordered region; the sequence is QRMNDYSQPESQSDLAPKSSTIQPQPQPL. The tract at residues 91-102 is mediates binding to target cells; the sequence is WALAKRNWLWAY. One can recognise a Ricin B-type lectin domain in the interval 123–212; the sequence is HREYFRFVNQ…EPSRDQTWYL (90 aa).

In terms of assembly, heterotrimer of 3 subunits, CdtA, CdtB and CdtC.

The protein resides in the cell outer membrane. Its function is as follows. CDTs are cytotoxins which induce host cell distension, growth arrest in G2/M phase, nucleus swelling, and chromatin fragmentation in HeLa cells. CdtA, along with CdtC, probably forms a heterodimeric subunit required for the delivery of CdtB. The chain is Cytolethal distending toxin subunit A (cdtA) from Haemophilus ducreyi (strain 35000HP / ATCC 700724).